The sequence spans 240 residues: tRNA (guanine-N(1)-)-methyltransferase (240 aa).

S-adenosyl-L-methionine is bound by residues Gly-108 and 127–132; that span reads LGDYIL.

The protein belongs to the RNA methyltransferase TrmD family. Homodimer.

The protein localises to the cytoplasm. It carries out the reaction guanosine(37) in tRNA + S-adenosyl-L-methionine = N(1)-methylguanosine(37) in tRNA + S-adenosyl-L-homocysteine + H(+). In terms of biological role, specifically methylates guanosine-37 in various tRNAs. The sequence is that of tRNA (guanine-N(1)-)-methyltransferase from Streptococcus sanguinis (strain SK36).